The chain runs to 435 residues: Methylenetetrahydrofolate--tRNA-(uracil-5-)-methyltransferase TrmFO (435 aa).

10–15 (GAGLAG) serves as a coordination point for FAD.

This sequence belongs to the MnmG family. TrmFO subfamily. The cofactor is FAD.

The protein localises to the cytoplasm. The catalysed reaction is uridine(54) in tRNA + (6R)-5,10-methylene-5,6,7,8-tetrahydrofolate + NADH + H(+) = 5-methyluridine(54) in tRNA + (6S)-5,6,7,8-tetrahydrofolate + NAD(+). The enzyme catalyses uridine(54) in tRNA + (6R)-5,10-methylene-5,6,7,8-tetrahydrofolate + NADPH + H(+) = 5-methyluridine(54) in tRNA + (6S)-5,6,7,8-tetrahydrofolate + NADP(+). Catalyzes the folate-dependent formation of 5-methyl-uridine at position 54 (M-5-U54) in all tRNAs. In Geotalea uraniireducens (strain Rf4) (Geobacter uraniireducens), this protein is Methylenetetrahydrofolate--tRNA-(uracil-5-)-methyltransferase TrmFO.